The primary structure comprises 117 residues: Ig heavy chain V region 1-72 (117 aa).

The signal sequence occupies residues 1 to 19 (MGWSCIMLFLAATATGVHS). The tract at residues 20–49 (QVQLQQPGAELVKPGASVKLSCKASGYTFT) is framework-1. C41 and C115 are disulfide-bonded. A complementarity-determining-1 region spans residues 50–54 (SYWMH). Residues 55–68 (WVKQRPGRGLEWIG) form a framework-2 region. Positions 69–85 (RIDPNSGGTKYNEKFKS) are complementarity-determining-2. A framework-3 region spans residues 86-117 (KATLTVDKPSSTAYMQLSSLTSEDSAVYYCAR).

This chain is Ig heavy chain V region 1-72, found in Mus musculus (Mouse).